A 540-amino-acid polypeptide reads, in one-letter code: FAD-binding monooxygenase lolF2 (540 aa).

FAD contacts are provided by residues 43–46 and 55–58; these read VWRE and DSLF. NADP(+) contacts are provided by residues 53–55, 182–188, and 205–206; these read AVD, TGPSGVQ, and QS.

This sequence belongs to the FAD-binding monooxygenase family. It depends on FAD as a cofactor.

The protein operates within alkaloid biosynthesis. Its function is as follows. FAD-binding monooxygenase; part of the gene cluster that mediates the biosynthesis of loline alkaloids, potent insecticidal agents composed of a pyrrolizidine ring system and an uncommon ether bridge linking carbons 2 and 7. Lolines are structurally differentiated by the various modifications of the L-amino group and include norloline, loline, N-methylloline, N-acetylloline, N-acetylnorloline, and N-formylloline. The first committed step is the condensation of O-acetyl-L-homoserine (derived from L-aspartic acid) and L-proline, probably catalyzed by the gamma-type pyridoxal 5'-phosphate(PLP)-dependent enzyme lolC, to give the diamino diacid, NACPP. Ensuing cyclization, decarboxylation, and acetylation steps yield 1-exo-acetamidopyrrolizidine (AcAP). LolO is required for installation of the ether bridge upon the pathway intermediate, 1-exo-acetamidopyrrolizidine (AcAP). In sequential 2-oxoglutarate- and O(2)-consuming steps, lolO removes hydrogens from C2 and C7 of AcAP to form both carbon-oxygen bonds in N-acetylnorloline (NANL), the precursor to all other lolines. The enzymes lolD, lolE, lolF and lolT have also been proposed to be involved in the ether-bridge installation. Further processing of the exocyclic moiety of NANL by fungal N-acetamidase (LolN), methyltransferase (LolM), and cytochrome P450 (LolP) enzymes, with occasional involvement of a plant acetyltransferase, generates the other known lolines. LolN transforms NANL to norlonine which is monomethylated and dimethylated to respectively lonine and N-methyllonine (NML) by lolM. LolP catalyzes hydroxylation of the methyl group in N-methylloline (NML) and further oxygenation to N-formylloline (NFL). A plant acetyltransferase is responsible for the acetylation of loline to form N-acetylloline (NAL). LolA might interact with aspartate kinase to prevent feedback inhibition of its activity by these end products and thereby promote production of l-homoserine from l-aspartate. The protein is FAD-binding monooxygenase lolF2 of Epichloe uncinata (Endophyte fungus).